Consider the following 202-residue polypeptide: MSTVDLARVGACVLKHAVTGEAVELRSLWQEQACVVAGLRRFGCMVCRWIARDLSSLKGLLDQHGVRLVGVGPEALGLQEFLDGGYFAGDLYLDESKQFYKELGFKRYSSLSILPAALGKPVRDVAAKAKAAGIQGNLSGDLLQSGGLLVVAKGGDKVLLHFVQKSPGDYAPQESILQALCISAEAACTHQPPQCDEEACSR.

Position 108 is a phosphotyrosine (Y108).

The protein belongs to the peroxiredoxin-like PRXL2 family. Prostamide/prostaglandin F synthase subfamily.

It localises to the cytoplasm. The protein localises to the cytosol. The catalysed reaction is prostaglandin H2 + [thioredoxin]-dithiol = prostaglandin F2alpha + [thioredoxin]-disulfide. The enzyme catalyses prostamide F2alpha + [thioredoxin]-disulfide = prostamide H2 + [thioredoxin]-dithiol. Functionally, catalyzes the reduction of prostaglandin-ethanolamide H(2) (prostamide H(2)) to prostamide F(2alpha) with NADPH as proton donor. Also able to reduce prostaglandin H(2) to prostaglandin F(2alpha). This is Prostamide/prostaglandin F synthase (PRXL2B) from Sus scrofa (Pig).